The sequence spans 801 residues: Ent-copalyl diphosphate synthase, chloroplastic (801 aa).

Substrate is bound at residue K241. Mg(2+)-binding residues include D373 and D375. Residues 373–376 (DIDD) carry the DXDD motif motif. K459 lines the substrate pocket.

The protein belongs to the terpene synthase family. Mg(2+) is required as a cofactor.

It is found in the plastid. It localises to the chloroplast. It catalyses the reaction (2E,6E,10E)-geranylgeranyl diphosphate = ent-copalyl diphosphate. It functions in the pathway plant hormone biosynthesis; gibberellin biosynthesis. Functionally, catalyzes the conversion of geranylgeranyl diphosphate to the gibberellin precursor ent-copalyl diphosphate. This chain is Ent-copalyl diphosphate synthase, chloroplastic, found in Pisum sativum (Garden pea).